A 596-amino-acid chain; its full sequence is Elongation factor 4 (596 aa).

In terms of domain architecture, tr-type G spans 2–184 (KHIRNFSIIA…VIVDQIPPPE (183 aa)). Residues 14–19 (DHGKST) and 131–134 (NKID) contribute to the GTP site.

It belongs to the TRAFAC class translation factor GTPase superfamily. Classic translation factor GTPase family. LepA subfamily.

Its subcellular location is the cell inner membrane. The enzyme catalyses GTP + H2O = GDP + phosphate + H(+). In terms of biological role, required for accurate and efficient protein synthesis under certain stress conditions. May act as a fidelity factor of the translation reaction, by catalyzing a one-codon backward translocation of tRNAs on improperly translocated ribosomes. Back-translocation proceeds from a post-translocation (POST) complex to a pre-translocation (PRE) complex, thus giving elongation factor G a second chance to translocate the tRNAs correctly. Binds to ribosomes in a GTP-dependent manner. This Shewanella sp. (strain ANA-3) protein is Elongation factor 4.